A 142-amino-acid polypeptide reads, in one-letter code: Hemoglobin subunit alpha-1 (142 aa).

Positions 2-142 (VLSADDKSNV…VSTVLTSKYR (141 aa)) constitute a Globin domain. Histidine 59 is a binding site for O2. Position 88 (histidine 88) interacts with heme b.

The protein belongs to the globin family. In terms of assembly, heterotetramer of two alpha chains and two beta chains. Red blood cells.

Its function is as follows. Involved in oxygen transport from the lung to the various peripheral tissues. Functionally, hemopressin acts as an antagonist peptide of the cannabinoid receptor CNR1. Hemopressin-binding efficiently blocks cannabinoid receptor CNR1 and subsequent signaling. The polypeptide is Hemoglobin subunit alpha-1 (HBA1) (Equus quagga burchellii (Burchell's zebra)).